We begin with the raw amino-acid sequence, 373 residues long: Alcohol dehydrogenase class-3 (373 aa).

Ala-1 bears the N-acetylalanine mark. Zn(2+)-binding residues include Cys-44, His-66, Cys-96, Cys-99, Cys-102, Cys-110, and Cys-173.

Belongs to the zinc-containing alcohol dehydrogenase family. Class-III subfamily. In terms of assembly, homodimer. It depends on Zn(2+) as a cofactor.

It is found in the cytoplasm. It carries out the reaction a primary alcohol + NAD(+) = an aldehyde + NADH + H(+). The enzyme catalyses a secondary alcohol + NAD(+) = a ketone + NADH + H(+). It catalyses the reaction S-(hydroxymethyl)glutathione + NADP(+) = S-formylglutathione + NADPH + H(+). The catalysed reaction is S-(hydroxymethyl)glutathione + NAD(+) = S-formylglutathione + NADH + H(+). It carries out the reaction S-nitrosoglutathione + NADH + H(+) = S-(hydroxysulfenamide)glutathione + NAD(+). Class-III ADH is remarkably ineffective in oxidizing ethanol, but it readily catalyzes the oxidation of long-chain primary alcohols and the oxidation of S-(hydroxymethyl) glutathione. Also acts as a S-nitroso-glutathione reductase by catalyzing the NADH-dependent reduction of S-nitrosoglutathione, thereby regulating protein S-nitrosylation. This chain is Alcohol dehydrogenase class-3, found in Saara hardwickii (Indian spiny-tailed lizard).